The primary structure comprises 321 residues: ATP-dependent 6-phosphofructokinase (321 aa).

Position 12 (Gly12) interacts with ATP. ADP is bound by residues 22 to 26 (RGVVR) and 55 to 60 (RYSVSD). ATP-binding positions include 73–74 (RF) and 103–106 (GDGS). Asp104 serves as a coordination point for Mg(2+). 127-129 (TID) contributes to the substrate binding site. Asp129 functions as the Proton acceptor in the catalytic mechanism. Arg156 serves as a coordination point for ADP. Substrate contacts are provided by residues Arg164 and 171–173 (MGR). ADP is bound by residues 187-189 (GCE), Arg213, and 215-217 (KRH). Substrate-binding positions include Glu224, Arg245, and 251–254 (HIQR).

It belongs to the phosphofructokinase type A (PFKA) family. ATP-dependent PFK group I subfamily. Prokaryotic clade 'B1' sub-subfamily. In terms of assembly, homotetramer. Mg(2+) is required as a cofactor.

Its subcellular location is the cytoplasm. The catalysed reaction is beta-D-fructose 6-phosphate + ATP = beta-D-fructose 1,6-bisphosphate + ADP + H(+). It functions in the pathway carbohydrate degradation; glycolysis; D-glyceraldehyde 3-phosphate and glycerone phosphate from D-glucose: step 3/4. Its activity is regulated as follows. Allosterically activated by ADP and other diphosphonucleosides, and allosterically inhibited by phosphoenolpyruvate. Its function is as follows. Catalyzes the phosphorylation of D-fructose 6-phosphate to fructose 1,6-bisphosphate by ATP, the first committing step of glycolysis. The sequence is that of ATP-dependent 6-phosphofructokinase from Haemophilus influenzae (strain PittEE).